A 186-amino-acid polypeptide reads, in one-letter code: Ribosome-recycling factor (186 aa).

This sequence belongs to the RRF family.

The protein resides in the cytoplasm. Its function is as follows. Responsible for the release of ribosomes from messenger RNA at the termination of protein biosynthesis. May increase the efficiency of translation by recycling ribosomes from one round of translation to another. The protein is Ribosome-recycling factor of Cytophaga hutchinsonii (strain ATCC 33406 / DSM 1761 / CIP 103989 / NBRC 15051 / NCIMB 9469 / D465).